We begin with the raw amino-acid sequence, 173 residues long: Alkyl hydroperoxide reductase AhpD (173 aa).

Cysteine 131 acts as the Proton donor in catalysis. Cysteine 131 and cysteine 134 are oxidised to a cystine. The active-site Cysteine sulfenic acid (-SOH) intermediate is cysteine 134.

Belongs to the AhpD family.

The catalysed reaction is N(6)-[(R)-dihydrolipoyl]-L-lysyl-[lipoyl-carrier protein] + a hydroperoxide = N(6)-[(R)-lipoyl]-L-lysyl-[lipoyl-carrier protein] + an alcohol + H2O. In terms of biological role, antioxidant protein with alkyl hydroperoxidase activity. Required for the reduction of the AhpC active site cysteine residues and for the regeneration of the AhpC enzyme activity. This chain is Alkyl hydroperoxide reductase AhpD, found in Rhizorhabdus wittichii (strain DSM 6014 / CCUG 31198 / JCM 15750 / NBRC 105917 / EY 4224 / RW1) (Sphingomonas wittichii).